The primary structure comprises 763 residues: Phosphoglycerol transferase I (763 aa).

4 consecutive transmembrane segments (helical) span residues 1-21, 26-46, 77-97, and 108-128; these read MSELLSVALFLASVLIYAWKA, WWFAATLTVLGLFVILNITLY, ILPGIGIALALVAVFGALGWV, and VGYSLLALLLALGSVDASPAF.

The protein belongs to the OpgB family.

Its subcellular location is the cell inner membrane. It carries out the reaction a phosphatidylglycerol + a membrane-derived-oligosaccharide D-glucose = a 1,2-diacyl-sn-glycerol + a membrane-derived-oligosaccharide 6-(glycerophospho)-D-glucose.. It functions in the pathway glycan metabolism; osmoregulated periplasmic glucan (OPG) biosynthesis. In terms of biological role, transfers a phosphoglycerol residue from phosphatidylglycerol to the membrane-bound nascent glucan backbones. The sequence is that of Phosphoglycerol transferase I from Salmonella dublin (strain CT_02021853).